A 222-amino-acid chain; its full sequence is 26S proteasome non-ATPase regulatory subunit 9 (222 aa).

The PDZ domain occupies 108 to 194; it reads QARDMAEARE…KPLNVTVIRR (87 aa). Ser-128 is modified (phosphoserine).

This sequence belongs to the proteasome subunit p27 family. Interacts with PSMC3. Part of a transient complex (modulator) containing PSMD9, PSMC6 and PSMC3 formed during the assembly of the 26S proteasome.

Functionally, acts as a chaperone during the assembly of the 26S proteasome, specifically of the base subcomplex of the PA700/19S regulatory complex (RC). During the base subcomplex assembly is part of an intermediate PSMD9:PSMC6:PSMC3 module, also known as modulator trimer complex; PSMD9 is released during the further base assembly process. The chain is 26S proteasome non-ATPase regulatory subunit 9 (Psmd9) from Mus musculus (Mouse).